The following is a 166-amino-acid chain: Phosphopantetheine adenylyltransferase (166 aa).

Residue serine 9 participates in substrate binding. Residues 9-10 (SF) and histidine 17 contribute to the ATP site. Substrate-binding residues include lysine 41, threonine 74, and arginine 88. Residues 89–91 (GLR), glutamate 99, and 124–130 (DSFISSS) each bind ATP.

The protein belongs to the bacterial CoaD family. Homohexamer. Mg(2+) serves as cofactor.

The protein localises to the cytoplasm. The enzyme catalyses (R)-4'-phosphopantetheine + ATP + H(+) = 3'-dephospho-CoA + diphosphate. The protein operates within cofactor biosynthesis; coenzyme A biosynthesis; CoA from (R)-pantothenate: step 4/5. Its function is as follows. Reversibly transfers an adenylyl group from ATP to 4'-phosphopantetheine, yielding dephospho-CoA (dPCoA) and pyrophosphate. The chain is Phosphopantetheine adenylyltransferase from Lactobacillus gasseri (strain ATCC 33323 / DSM 20243 / BCRC 14619 / CIP 102991 / JCM 1131 / KCTC 3163 / NCIMB 11718 / NCTC 13722 / AM63).